Reading from the N-terminus, the 292-residue chain is uncharacterized protein (292 aa).

The disordered stretch occupies residues methionine 1–leucine 213. Composition is skewed to basic residues over residues threonine 27–lysine 43 and alanine 50–proline 78. Residues glutamine 90–isoleucine 100 show a composition bias toward polar residues. The span at proline 116 to arginine 134 shows a compositional bias: pro residues. Low complexity predominate over residues serine 143 to threonine 158.

This is an uncharacterized protein from Caenorhabditis elegans.